Reading from the N-terminus, the 187-residue chain is Ribosome-recycling factor (187 aa).

Belongs to the RRF family.

The protein localises to the cytoplasm. Its function is as follows. Responsible for the release of ribosomes from messenger RNA at the termination of protein biosynthesis. May increase the efficiency of translation by recycling ribosomes from one round of translation to another. This Rhodopseudomonas palustris (strain BisA53) protein is Ribosome-recycling factor.